The following is a 595-amino-acid chain: RuBisCO large subunit-binding protein subunit beta, chloroplastic (595 aa).

The transit peptide at 1-49 directs the protein to the chloroplast; it reads MASTFSATTSSCNLSSSAAISSFPLAAGKRNANKVVLPRKNRNVKVSAM.

Belongs to the chaperonin (HSP60) family. As to quaternary structure, oligomer of probably six alpha and six beta subunits.

Its subcellular location is the plastid. The protein localises to the chloroplast. This protein binds RuBisCO small and large subunits and is implicated in the assembly of the enzyme oligomer. This Pisum sativum (Garden pea) protein is RuBisCO large subunit-binding protein subunit beta, chloroplastic.